The chain runs to 249 residues: Undecaprenyl-diphosphatase (249 aa).

A run of 8 helical transmembrane segments spans residues Gly11–Phe31, Pro35–Val55, Leu80–Ser100, Val101–Leu121, Ile135–Ile155, Phe180–Phe200, Thr202–Val222, and Val226–Leu246.

The protein belongs to the UppP family.

It is found in the cell membrane. It catalyses the reaction di-trans,octa-cis-undecaprenyl diphosphate + H2O = di-trans,octa-cis-undecaprenyl phosphate + phosphate + H(+). In terms of biological role, catalyzes the dephosphorylation of undecaprenyl diphosphate (UPP). The protein is Undecaprenyl-diphosphatase of Methanococcus maripaludis (strain C7 / ATCC BAA-1331).